A 360-amino-acid polypeptide reads, in one-letter code: Heat-inducible transcription repressor HrcA (360 aa).

The protein belongs to the HrcA family.

Its function is as follows. Negative regulator of class I heat shock genes (grpE-dnaK-dnaJ and groELS operons). Prevents heat-shock induction of these operons. In Gloeobacter violaceus (strain ATCC 29082 / PCC 7421), this protein is Heat-inducible transcription repressor HrcA.